A 210-amino-acid chain; its full sequence is MTIGLVGRKVGMTRIFTEDGVSIPVTVIEVEANRVTQVKSVETDGYNAIQVTTGAKKASRVTKPEAGHFAKAGVEAGRGLWEFRLNNGETFTVGSELKVDLLADVKMVDVTGTSKGKGFAGTVKRHNFRTQDMTHGNSLSHRAPGSIGQNQTPGRVFKGKKMAGHMGAERVTTQNLELVRVDAERNLLLIKGAVPGATNGNVIVKPAVKA.

The disordered stretch occupies residues 134–153 (THGNSLSHRAPGSIGQNQTP). Glutamine 151 is subject to N5-methylglutamine.

It belongs to the universal ribosomal protein uL3 family. Part of the 50S ribosomal subunit. Forms a cluster with proteins L14 and L19. Methylated by PrmB.

Functionally, one of the primary rRNA binding proteins, it binds directly near the 3'-end of the 23S rRNA, where it nucleates assembly of the 50S subunit. This chain is Large ribosomal subunit protein uL3, found in Aeromonas salmonicida (strain A449).